A 579-amino-acid chain; its full sequence is Protein alan shepard (579 aa).

The span at 1–12 (MHPRYSPAPPPQ) shows a compositional bias: pro residues. Positions 1–66 (MHPRYSPAPP…GSSSSAAAAP (66 aa)) are disordered. Y5 carries the phosphotyrosine modification. Positions 13-24 (QQQQMGGPPHQQ) are enriched in low complexity. Over residues 25–35 (QGGGGGGGGSM) the composition is skewed to gly residues. Residues 37 to 54 (GPSNAQQLPPQIPRSQNY) show a composition bias toward polar residues. Positions 55–66 (SNGSSSSAAAAP) are enriched in low complexity. A phosphotyrosine mark is found at Y125 and Y142. The segment at 164 to 225 (PATTTYGQRV…TVQNQNQQGG (62 aa)) is disordered. The span at 178–225 (SPSNTNSSSSSNTGSQSGTLSTSLSNTTNTNTNMGPNGTVQNQNQQGG) shows a compositional bias: low complexity. 2 consecutive RRM domains span residues 231-304 (TNLY…MAKQ) and 310-389 (TNLY…FADG). Residues 553 to 579 (MTDSEQASTAASPDEAYTQYPHQAAPK) form a disordered region.

Functionally, has a role in the perception of gravity. The sequence is that of Protein alan shepard from Drosophila sechellia (Fruit fly).